Here is a 478-residue protein sequence, read N- to C-terminus: 3-isopropylmalate dehydratase large subunit (478 aa).

Cysteine 347, cysteine 407, and cysteine 410 together coordinate [4Fe-4S] cluster.

This sequence belongs to the aconitase/IPM isomerase family. LeuC type 1 subfamily. As to quaternary structure, heterodimer of LeuC and LeuD. Requires [4Fe-4S] cluster as cofactor.

The catalysed reaction is (2R,3S)-3-isopropylmalate = (2S)-2-isopropylmalate. It functions in the pathway amino-acid biosynthesis; L-leucine biosynthesis; L-leucine from 3-methyl-2-oxobutanoate: step 2/4. Functionally, catalyzes the isomerization between 2-isopropylmalate and 3-isopropylmalate, via the formation of 2-isopropylmaleate. In Prochlorococcus marinus (strain MIT 9303), this protein is 3-isopropylmalate dehydratase large subunit.